A 190-amino-acid polypeptide reads, in one-letter code: Probable RNA-binding protein 18 (190 aa).

The region spanning 25–106 (HRLWIGNLDP…KKLVVRWAHA (82 aa)) is the RRM domain. The tract at residues 166-190 (VYSYFKPPDKKRTTPYSRTAWKSRR) is disordered.

This is Probable RNA-binding protein 18 (RBM18) from Pongo abelii (Sumatran orangutan).